Consider the following 359-residue polypeptide: Alanine racemase, biosynthetic (359 aa).

The Proton acceptor; specific for D-alanine role is filled by Lys-34. Lys-34 carries the N6-(pyridoxal phosphate)lysine modification. The residue at position 122 (Lys-122) is an N6-carboxylysine. Arg-129 provides a ligand contact to substrate. The active-site Proton acceptor; specific for L-alanine is the Tyr-255. Residue Met-303 coordinates substrate.

This sequence belongs to the alanine racemase family. As to quaternary structure, homodimer. Requires pyridoxal 5'-phosphate as cofactor.

The catalysed reaction is L-alanine = D-alanine. It participates in amino-acid biosynthesis; D-alanine biosynthesis; D-alanine from L-alanine: step 1/1. Its pathway is cell wall biogenesis; peptidoglycan biosynthesis. Its function is as follows. Catalyzes the interconversion of L-alanine and D-alanine. Provides the D-alanine required for cell wall biosynthesis. In Escherichia coli (strain K12), this protein is Alanine racemase, biosynthetic.